Here is a 98-residue protein sequence, read N- to C-terminus: Protein PROLINE CONTENT ALTERNATIVE 22 (98 aa).

In terms of tissue distribution, mainly expressed in flowers, to a lower extent, in roots and, at very low levels, in leaves and stems.

Its subcellular location is the cytoplasm. Its function is as follows. Acts as an opponent to RZF1 during early seedling growth in term of proline accumulation in response to dehydration and abscisic acid (ABA). Confers sensitivity to abiotic stresses such as ABA, drought and osmotic stress (e.g. mannitol treatment) by preventing proline accumulation and by reducing the expression of dehydration-inducible genes. Promotes the production of lipid peroxidation by drought stress thus leading to malondialdehyde (MDA) synthesis. Prevents pollen tube elongation. Necessary for RZF1 expression in seedlings. The protein is Protein PROLINE CONTENT ALTERNATIVE 22 of Arabidopsis thaliana (Mouse-ear cress).